The primary structure comprises 2567 residues: Highly reducing polyketide synthase sor1 (2567 aa).

Residues 14 to 436 (SEPIAIIGMS…GANAHIILED (423 aa)) form the Ketosynthase family 3 (KS3) domain. Active-site for beta-ketoacyl synthase activity residues include Cys-187, His-322, and His-359. The interval 550 to 841 (VFTGQGAQWW…VVEVGPHTAL (292 aa)) is malonyl-CoA:ACP transacylase (MAT) domain. Positions 939 to 1079 (HHLLGSLVEG…GLISIEFEAS (141 aa)) are N-terminal hotdog fold. The segment at 939 to 1249 (HHLLGSLVEG…GFSYQSLGRS (311 aa)) is dehydratase (DH) domain. The 314-residue stretch at 939-1252 (HHLLGSLVEG…YQSLGRSVSL (314 aa)) folds into the PKS/mFAS DH domain. His-971 functions as the Proton acceptor; for dehydratase activity in the catalytic mechanism. A C-terminal hotdog fold region spans residues 1095-1252 (YKRQIPPAQL…YQSLGRSVSL (158 aa)). The Proton donor; for dehydratase activity role is filled by Asp-1161. The segment at 1426–1534 (LEIGASTGGI…RSLLKPGGTL (109 aa)) is methyltransferase (CMet) domain. The interval 1852 to 2163 (FLPELLVFGD…TEEETGKRVL (312 aa)) is enoyl reductase (ER) domain. The segment at 2187–2369 (ASYLIVGGNG…AVSIDLSLVD (183 aa)) is ketoreductase (KR) domain. Positions 2481 to 2558 (EAISVVGSAV…QLVANVVDRS (78 aa)) constitute a Carrier domain. Ser-2518 is modified (O-(pantetheine 4'-phosphoryl)serine).

It functions in the pathway secondary metabolite biosynthesis. In terms of biological role, highly reducing polyketide synthase; part of the SOR gene cluster that mediates the biosynthesis of sorbicillinoids, a diverse group of yellow secondary metabolites that restrict growth of competing pathogenic fungi but not of bacteria. Sorbicillinoids biosynthesis requires the action of two PKSs. The SOR cluster is required for the production of trichodimerol and dihydrotrichotetronin, with sor2 being sufficient for production of trichodimerol, but not dihydrotrichotetronin in the light. Sor1 iteratively combines three acetyl units and the growing chain is modified by the ketoacyl reductase subunit, and optional by the enoyl reductase subunit in the second cycle. The polyketide is then handed over to the PKS sor2, which adds three more acetyl units, and two methyl groups. Sor2 releases an aldehyde, which undergoes spontaneous cyclization resulting in the formation of sorbicillin or 2',3'-dihydrosorbicillin. The monooxygenase sor5 oxidizes sorbicillin and 2',3'-dihydrosorbicillin to 2',3'-dihydrosorbicillinol and sorbicillinol, respectively. The oxidoreductase sor8 further converts sorbicillinol into oxosorbicillinol. Sorbicillinol is the building block for the other sorbicillinoids such as disorbicillinol, bisvertinolon, dihydrobisvertinolone, and dihydrotrichotetronine. This Hypocrea jecorina (strain QM6a) (Trichoderma reesei) protein is Highly reducing polyketide synthase sor1.